The primary structure comprises 107 residues: Large ribosomal subunit protein uL24 (107 aa).

It belongs to the universal ribosomal protein uL24 family. Part of the 50S ribosomal subunit.

In terms of biological role, one of two assembly initiator proteins, it binds directly to the 5'-end of the 23S rRNA, where it nucleates assembly of the 50S subunit. Its function is as follows. One of the proteins that surrounds the polypeptide exit tunnel on the outside of the subunit. The chain is Large ribosomal subunit protein uL24 from Nitratidesulfovibrio vulgaris (strain ATCC 29579 / DSM 644 / CCUG 34227 / NCIMB 8303 / VKM B-1760 / Hildenborough) (Desulfovibrio vulgaris).